Reading from the N-terminus, the 498-residue chain is Neoxanthin synthase, chloroplastic (498 aa).

The transit peptide at 1-33 directs the protein to the chloroplast; the sequence is METLLKPLTSLLLSSPTPHRSIFQQNPPSLNPT. Positions 16–38 are disordered; the sequence is PTPHRSIFQQNPPSLNPTTKKKS. Residues 22 to 33 are compositionally biased toward polar residues; sequence IFQQNPPSLNPT. 84 to 112 lines the NAD(+) pocket; that stretch reads VIIIGAGPAGLRLAEHVSKYGIKVCCVDP.

The protein belongs to the lycopene cyclase family.

Its subcellular location is the plastid. The protein localises to the chloroplast. It carries out the reaction all-trans-violaxanthin = all-trans-neoxanthin. It participates in carotenoid biosynthesis; neoxanthin biosynthesis. Involved in the synthesis of neoxanthin, the last product of carotenoid synthesis and a precursor of abscisic acid. The chain is Neoxanthin synthase, chloroplastic (NXS) from Solanum tuberosum (Potato).